The following is a 565-amino-acid chain: Thiol:disulfide interchange protein DsbD (565 aa).

The N-terminal stretch at 1–19 is a signal peptide; it reads MAQRIFTLILLLCSTSVFA. Cystine bridges form between Cys122-Cys128 and Cys182-Cys304. Helical transmembrane passes span 163-183, 208-228, 243-263, 296-316, 323-343, 357-377, and 384-404; these read LPFSALWALLIGIGIAFTPCV, LLTFIYVQGMALTYTALGLVV, YVLIGLAIVFTLLAMSMFGLF, IAGLICSPCTTAPLSAILLYI, WLGGGTLYLYALGMGLPLMLI, WMEQVKTAFGFVILALPVFLL, and VWGLRLWSALGVAFFGWAFIT. One can recognise a Thioredoxin domain in the interval 434 to 565; the sequence is WAFGATHTAQ…FSAHLRDRQP (132 aa). The cysteines at positions 480 and 483 are disulfide-linked.

It belongs to the thioredoxin family. DsbD subfamily.

It is found in the cell inner membrane. The enzyme catalyses [protein]-dithiol + NAD(+) = [protein]-disulfide + NADH + H(+). It catalyses the reaction [protein]-dithiol + NADP(+) = [protein]-disulfide + NADPH + H(+). Functionally, required to facilitate the formation of correct disulfide bonds in some periplasmic proteins and for the assembly of the periplasmic c-type cytochromes. Acts by transferring electrons from cytoplasmic thioredoxin to the periplasm. This transfer involves a cascade of disulfide bond formation and reduction steps. The protein is Thiol:disulfide interchange protein DsbD of Shigella flexneri serotype 5b (strain 8401).